Consider the following 212-residue polypeptide: MQTVAVIDYGMGNLHSVAKALEHVGAGRVLITSDAKVIREADRVVFPGVGAIRDCMAEIRRLGFDSLVREVSQDRPFLGICVGMQALLDRSEESGGVDCIGLFPGQVKFFGKDLYEEGEHLKVPHMGWNQVAQAVDHPLWHDIPDLARFYFVHSFYIDAANQRQVVGRGHYGLDFAAALADGSRFAVQFHPEKSHTHGLQLLQNFAAWDGRW.

One can recognise a Glutamine amidotransferase type-1 domain in the interval 3–212; sequence TVAVIDYGMG…QNFAAWDGRW (210 aa). Catalysis depends on Cys81, which acts as the Nucleophile. Active-site residues include His190 and Glu192.

In terms of assembly, heterodimer of HisH and HisF.

The protein resides in the cytoplasm. The catalysed reaction is 5-[(5-phospho-1-deoxy-D-ribulos-1-ylimino)methylamino]-1-(5-phospho-beta-D-ribosyl)imidazole-4-carboxamide + L-glutamine = D-erythro-1-(imidazol-4-yl)glycerol 3-phosphate + 5-amino-1-(5-phospho-beta-D-ribosyl)imidazole-4-carboxamide + L-glutamate + H(+). It carries out the reaction L-glutamine + H2O = L-glutamate + NH4(+). The protein operates within amino-acid biosynthesis; L-histidine biosynthesis; L-histidine from 5-phospho-alpha-D-ribose 1-diphosphate: step 5/9. Functionally, IGPS catalyzes the conversion of PRFAR and glutamine to IGP, AICAR and glutamate. The HisH subunit catalyzes the hydrolysis of glutamine to glutamate and ammonia as part of the synthesis of IGP and AICAR. The resulting ammonia molecule is channeled to the active site of HisF. This is Imidazole glycerol phosphate synthase subunit HisH from Pseudomonas savastanoi pv. phaseolicola (strain 1448A / Race 6) (Pseudomonas syringae pv. phaseolicola (strain 1448A / Race 6)).